We begin with the raw amino-acid sequence, 1305 residues long: RNA-directed RNA polymerase (1305 aa).

Residues 563–814 form the RdRp catalytic domain; sequence IIVGDLEATG…KTLIAPFSVE (252 aa).

It belongs to the reoviridae RNA-directed RNA polymerase family.

The enzyme catalyses RNA(n) + a ribonucleoside 5'-triphosphate = RNA(n+1) + diphosphate. The polypeptide is RNA-directed RNA polymerase (Segment-1) (African horse sickness virus (AHSV)).